The following is a 329-amino-acid chain: MSSSREVIAELLWAEKYRPKTLDEIVDQEEIVSRLKQFVKERNMPHLLFAGPPGTGKTTAAHCLAHDLFGENYRQYMLELNASDERGIDVIRSKVKEFARTRVAANIPFKIVLLDEADNMTADAQQALRRLMEMYTATTRFILIANYPSKIIEPIQSRCAVFRFAPLKKEDVISRLKWIAEQEKVEIDEEALEAIHDLSEGDMRRAINILQAAAALGKVTVDSVYKVVGLAHPREIRQMIQLALAGNFNDAREKLRELMINYGLSGVDVIKQVHREIFSTDIKIPDEFKIIIADLAGEIQFRLVEGADDEIQLNAFLARLAFLGKKLKP.

Residue 51–58 coordinates ATP; sequence GPPGTGKT.

Belongs to the activator 1 small subunits family. RfcS subfamily. In terms of assembly, heteromultimer composed of small subunits (RfcS) and large subunits (RfcL).

Functionally, part of the RFC clamp loader complex which loads the PCNA sliding clamp onto DNA. This Staphylothermus marinus (strain ATCC 43588 / DSM 3639 / JCM 9404 / F1) protein is Replication factor C small subunit.